Here is a 123-residue protein sequence, read N- to C-terminus: Large ribosomal subunit protein bL12 (123 aa).

It belongs to the bacterial ribosomal protein bL12 family. Homodimer. Part of the ribosomal stalk of the 50S ribosomal subunit. Forms a multimeric L10(L12)X complex, where L10 forms an elongated spine to which 2 to 4 L12 dimers bind in a sequential fashion. Binds GTP-bound translation factors.

Forms part of the ribosomal stalk which helps the ribosome interact with GTP-bound translation factors. Is thus essential for accurate translation. This Bacillus licheniformis (strain ATCC 14580 / DSM 13 / JCM 2505 / CCUG 7422 / NBRC 12200 / NCIMB 9375 / NCTC 10341 / NRRL NRS-1264 / Gibson 46) protein is Large ribosomal subunit protein bL12.